A 91-amino-acid chain; its full sequence is Small ribosomal subunit protein uS19 (91 aa).

The protein belongs to the universal ribosomal protein uS19 family.

In terms of biological role, protein S19 forms a complex with S13 that binds strongly to the 16S ribosomal RNA. The polypeptide is Small ribosomal subunit protein uS19 (Afipia carboxidovorans (strain ATCC 49405 / DSM 1227 / KCTC 32145 / OM5) (Oligotropha carboxidovorans)).